The following is an 821-amino-acid chain: MIMDNFDSPFQYNRPEMTVEAIKKSIVYKLIFLIGRSPREASQRDWLNATLHAVRDLVTEGWITTARQTRAEDSRRVYYLSMEFLIGRTLSNAMIAEGIYGLAQEALSELNVDLEEVLEKEVDPGLGNGGLGRLAACFMDSIATLGLPGMGYGIRYEYGMFRQKIENGQQVERPDAWLEKGAPWEFIRPSKRFTVEFGGNIHFEGKKCIWQDTEKVTALAYDQMIPGYQNNSAATLRLWSAHAGEVFNLADFNRGEHLAALEEHSANKNLSRVLYPDDSTWNGRELRLRQEYFLVSASLQDILRRHKRTHNSLENLADKVAIHLNDTHPALAIPELMRILVDDEGFEWKKAWEMTRNIFSYTCHTLMSEALETWPVEMMAKILPRHLQMIFEINDHFLEYVRTYVTTDNDFIRRVSLIEEGYQRKVRMGWLSVVGSHKINGVAEIHSDLMVTSTFADFARIFPERFTNVTNGITPRRWLAVANPQLAALFDKYIGSEWRCDLSQIEKLKPFAQEKAFKEAVADIKFANKVKLAEYVKSELGVELDPHALFDVQVKRIHEYKRQMLNVLHIIARYNEMLTNPEKDWQPRVFILAGKAASAYYAAKQTIHLINDVANVINNDERLKGRLKVVFIPNYSVSLAQLIIPAADISEQISLAGTEASGTSNMKFALNGALTLGTLDGANVEILENVGEDNIFIFGNTVEQVEQLRREGYRSFEYYQNDAQLRTVVDQIIEGKFSPEDPQRYHQLLQGLQYHDYYQAFADFRSYVETQKAVDEKYKQRDQWIESTIQNIVNMGFFSSDRTIKEYAERIWKVEPVQLGD.

Residue lysine 667 is modified to N6-(pyridoxal phosphate)lysine.

Belongs to the glycogen phosphorylase family. Pyridoxal 5'-phosphate is required as a cofactor.

The enzyme catalyses [(1-&gt;4)-alpha-D-glucosyl](n) + phosphate = [(1-&gt;4)-alpha-D-glucosyl](n-1) + alpha-D-glucose 1-phosphate. Its function is as follows. Phosphorylase is an important allosteric enzyme in carbohydrate metabolism. Enzymes from different sources differ in their regulatory mechanisms and in their natural substrates. However, all known phosphorylases share catalytic and structural properties. This chain is Glycogen phosphorylase (glgP), found in Haemophilus influenzae (strain ATCC 51907 / DSM 11121 / KW20 / Rd).